A 119-amino-acid chain; its full sequence is Protein BEX4 (119 aa).

The disordered stretch occupies residues 1–53 (MESKEELAANNLNGENAQQENEGREQAPTQNEETRHLGGGEGQKPGGNIRRGR). Over residues 8 to 20 (AANNLNGENAQQE) the composition is skewed to low complexity. An interaction with SIRT2 region spans residues 31–89 (NEETRHLGGGEGQKPGGNIRRGRVRRLVPNFRWAIPNRHIEHNEARDDVERFVGQMMEI). The interaction with alpha-tubulin stretch occupies residues 31-119 (NEETRHLGGG…DNHYDFCLIP (89 aa)). Cys-116 is a binding site for Zn(2+).

The protein belongs to the BEX family. Interacts with alpha-tubulin. Interacts with SIRT2. In terms of processing, ubiquitinated and degraded by the proteasome.

The protein resides in the cytoplasm. Its subcellular location is the cytoskeleton. The protein localises to the spindle pole. It localises to the nucleus. In terms of biological role, may play a role in microtubule deacetylation by negatively regulating the SIRT2 deacetylase activity toward alpha-tubulin and thereby participate in the control of cell cycle progression and genomic stability. In absence of reductive stress, acts as a pseudosubstrate for the CRL2(FEM1B) complex: associates with FEM1B via zinc, thereby preventing association between FEM1B and its substrates. In Pongo abelii (Sumatran orangutan), this protein is Protein BEX4.